The sequence spans 451 residues: UDP-N-acetylmuramoylalanine--D-glutamate ligase (451 aa).

An ATP-binding site is contributed by 118-124 (GTKGKST).

This sequence belongs to the MurCDEF family.

The protein resides in the cytoplasm. The enzyme catalyses UDP-N-acetyl-alpha-D-muramoyl-L-alanine + D-glutamate + ATP = UDP-N-acetyl-alpha-D-muramoyl-L-alanyl-D-glutamate + ADP + phosphate + H(+). It participates in cell wall biogenesis; peptidoglycan biosynthesis. In terms of biological role, cell wall formation. Catalyzes the addition of glutamate to the nucleotide precursor UDP-N-acetylmuramoyl-L-alanine (UMA). This is UDP-N-acetylmuramoylalanine--D-glutamate ligase from Borreliella burgdorferi (strain ZS7) (Borrelia burgdorferi).